Consider the following 897-residue polypeptide: MTDVTVKTLAAEIQTSVDRLVQQFADAGIPKSADDSVTAQEKQTLLSHLNREHGSAPDKLTLQRKTRSTLNVPGTGGKSKSVQIEVRKTRTFVKRDPQEAERLAAEEQAQREAEEQAQREAEITAKREAELKAEREAAEKAKRDASDKAKRDAAEKDKVSNQQTDEMTKTAQTEKARRENEAAELKRKAEEEARRKLEEDARRVAEEARRMAEENEKNGINPVEQTEDTSDYHVTTSQHARQAEDENDREVEGGRGRTRTASKTARPQKKGNKHAESKADREEARAAGRGGKGGKRKGSPLLQQGFQKPAQAVNRDVVIGETITVGDLANKMAVKGSQVIKAMMKLGAMATINQVIDQETAQLVAEEMGHKVILRRENELEEAVMSDRDTGAAAEPRAPVVTIMGHVDHGKTSLLDYIRSTKVASGEAGGITQHIGAYHVETDNGMITFLDTPGHAAFTSMRARGAQATDIVVLVVAADDGVMPQTIEAIQHAKAAQVPLVVAVNKIDKPEADMDRVKNELSQYGVMPEEWGGEAQFIPVSAKAGTGIDDLLNAILLQAEVLELKAIRNGMASGAVIESFLDKGRGPVATVLVREGTLNKGDIVLCGFEYGRVRAMRNELGQEVLEAGPSIPVEILGLSGVPAAGDEVTVVRDEKKAREVALYRQGKFREVKLARQQKSKLENMFANMTEGEVHEVNVVLKADVQGSVEAISDSLLKLSTDEVKVKIIGSGVGGITETDATLAAASNAILVGFNVRADASARKVIESESLDLRYYSVIYNLIDEVKAAMSGMLSPELKQQIIGLAEVRDVFKSPKFGAIAGCMVTEGNIKRHNPIRVLRDNVVIYEGELESLRRFKDDVNEVRNGMECGIGVKNYNDVRVGDMIEVFEIIEIQRTIA.

A disordered region spans residues 52 to 310 (EHGSAPDKLT…LLQQGFQKPA (259 aa)). Residues 68–82 (STLNVPGTGGKSKSV) show a composition bias toward polar residues. 2 stretches are compositionally biased toward basic and acidic residues: residues 85 to 159 (EVRK…KDKV) and 166 to 217 (EMTK…ENEK). Residues 256 to 272 (GRTRTASKTARPQKKGN) are compositionally biased toward basic residues. The segment covering 273-286 (KHAESKADREEARA) has biased composition (basic and acidic residues). The tr-type G domain occupies 396–565 (PRAPVVTIMG…LLQAEVLELK (170 aa)). Positions 405–412 (GHVDHGKT) are G1. Residue 405–412 (GHVDHGKT) participates in GTP binding. Positions 430-434 (GITQH) are G2. The segment at 451 to 454 (DTPG) is G3. Residues 451-455 (DTPGH) and 505-508 (NKID) contribute to the GTP site. The G4 stretch occupies residues 505-508 (NKID). The G5 stretch occupies residues 541 to 543 (SAK).

It belongs to the TRAFAC class translation factor GTPase superfamily. Classic translation factor GTPase family. IF-2 subfamily.

It localises to the cytoplasm. Functionally, one of the essential components for the initiation of protein synthesis. Protects formylmethionyl-tRNA from spontaneous hydrolysis and promotes its binding to the 30S ribosomal subunits. Also involved in the hydrolysis of GTP during the formation of the 70S ribosomal complex. This is Translation initiation factor IF-2 (infB) from Enterobacter cloacae.